The primary structure comprises 711 residues: MLACLTRGNLLDVLQEGFNEQQLQAYVAWVNAQLKKRPSVKPVQDLRQDLRDGVILAYLIEIVGQLALDSDASVDERTDFFLLHSPFKAAGEKLTGVQLSPSNQQEMKSNVERVLQFVASKKIRMHQTSAKDIVEGNLKSIMRLVLALAAHFKPGSSRTVSQGRDSKAPVQSHQPHCATAVAQGAAAALADVCHDVSRSGRDVFRYRQRNASVDGEIENPYWSVRALVQQYEGQQKSPSESSCSSLTSPSPIHSAKSESIITQAEEKADFVIIPSEGIENRTDEPDSPSSRDWRPGSRGTYLEATWEEQLLEQQEHLEKEMEEAKKMISGLQALLLNGSLPEDEQERPVALCEPGVNPEEQLIIIRSRLDQSVEENQDLKKELLKCKQEARNLQGIKDALQQRLTQQDTSVLQLKQELLRANMDKDELHNQNVDLQRKLEERNRLLGEYKKELGQKDRLFQQQQAKLEEALRKLSDASYQQVDLERELEQKDVLLAHCMKGETDEVTNYNSHSSQRNGFVLPVAGRGATTVTHRGPQTSDLQLVRDALRSLRNSFSGHDPQHHTIDSLEQGISSLMERLHVVETQKKQERKVGGRSPRNQASSEYRASWPPNSTLPHSQSSPAVSSTCTKVLYFTDRSLTPFMVNIPKRLGEVTLKDFKAAIDREGNHRYHFKALDPEFGTVKEEVFHDDDAIPGWEGKIVAWVEEDHREN.

Leu2 is lipidated: N-myristoyl glycine. A Phosphoserine modification is found at Val13. The region spanning 20-153 (EQQLQAYVAW…LVLALAAHFK (134 aa)) is the Calponin-homology (CH) domain. The tract at residues 153 to 326 (KPGSSRTVSQ…LEKEMEEAKK (174 aa)) is actin-binding. Ser212 is modified (phosphoserine). Disordered stretches follow at residues 233-258 (GQQK…AKSE), 271-298 (VIIP…PGSR), and 584-623 (TQKK…SSPA). The segment covering 237 to 254 (SPSESSCSSLTSPSPIHS) has biased composition (low complexity). A Phosphoserine modification is found at Ser257. Over residues 278–295 (IENRTDEPDSPSSRDWRP) the composition is skewed to basic and acidic residues. Residues 279–452 (ENRTDEPDSP…NRLLGEYKKE (174 aa)) are a coiled coil. Residues 597–623 (PRNQASSEYRASWPPNSTLPHSQSSPA) are compositionally biased toward polar residues. The DIX domain occupies 600-680 (QASSEYRASW…HFKALDPEFG (81 aa)). Ser618 bears the Phosphoserine mark.

It belongs to the DIXDC1 family. As to quaternary structure, may bind filamentous actin. Directly interacts (via DIX domain) with DVL2 (via DIX domain). Interacts with gamma-tubulin. Interacts with the complex composed of DVL2 and Rac. Interacts with AXIN1; competes with MAP3K1. Interacts with MAP3K4 preventing MAP3K4 interaction with AXIN1. In terms of processing, phosphorylated on tyrosine and serine residues. Polyubiquitinated, leading to its proteasomal degradation. WNT3A signaling increases DIXDC1 protein levels by inhibiting its ubiquitination and subsequent degradation. As to expression, abundantly expressed in brain and testis and to a lower extent in lung, kidney, colon, ovary and urinary bladder. Expressed in brain, liver, testis and spleen (at protein level). Expressed throughout the brain with strong expression in main and accessory olfactory bulbs, cerebral cortex, piriform cortex, hippocampus, habenular nucleus, dorsal thalamus, superior and inferior colliculi and cerebellum.

It localises to the cell junction. It is found in the focal adhesion. Its subcellular location is the cytoplasm. The protein resides in the cytoskeleton. The protein localises to the stress fiber. Its function is as follows. Positive effector of the Wnt signaling pathway; activates WNT3A signaling via DVL2. Regulates JNK activation by AXIN1 and DVL2. In Mus musculus (Mouse), this protein is Dixin (Dixdc1).